The primary structure comprises 220 residues: Fructose-6-phosphate aldolase (220 aa).

The Schiff-base intermediate with substrate role is filled by Lys85.

The protein belongs to the transaldolase family. Type 3A subfamily. As to quaternary structure, homodecamer.

The protein localises to the cytoplasm. It catalyses the reaction beta-D-fructose 6-phosphate = dihydroxyacetone + D-glyceraldehyde 3-phosphate. Functionally, catalyzes the reversible formation of fructose 6-phosphate from dihydroxyacetone and D-glyceraldehyde 3-phosphate via an aldolization reaction. In Salmonella agona (strain SL483), this protein is Fructose-6-phosphate aldolase.